The chain runs to 237 residues: DNA repair protein RecO (237 aa).

Belongs to the RecO family.

Its function is as follows. Involved in DNA repair and RecF pathway recombination. This chain is DNA repair protein RecO, found in Rickettsia conorii (strain ATCC VR-613 / Malish 7).